We begin with the raw amino-acid sequence, 445 residues long: Exodeoxyribonuclease 7 large subunit (445 aa).

This sequence belongs to the XseA family. In terms of assembly, heterooligomer composed of large and small subunits.

The protein localises to the cytoplasm. The enzyme catalyses Exonucleolytic cleavage in either 5'- to 3'- or 3'- to 5'-direction to yield nucleoside 5'-phosphates.. In terms of biological role, bidirectionally degrades single-stranded DNA into large acid-insoluble oligonucleotides, which are then degraded further into small acid-soluble oligonucleotides. The polypeptide is Exodeoxyribonuclease 7 large subunit (Shewanella halifaxensis (strain HAW-EB4)).